We begin with the raw amino-acid sequence, 873 residues long: Leucine--tRNA ligase (873 aa).

The 'HIGH' region signature appears at 41–51 (PYPSGRIHMGH). The 'KMSKS' region motif lies at 645–649 (KMSKS). Position 648 (K648) interacts with ATP.

Belongs to the class-I aminoacyl-tRNA synthetase family.

It localises to the cytoplasm. The enzyme catalyses tRNA(Leu) + L-leucine + ATP = L-leucyl-tRNA(Leu) + AMP + diphosphate. The polypeptide is Leucine--tRNA ligase (Cereibacter sphaeroides (strain ATCC 17025 / ATH 2.4.3) (Rhodobacter sphaeroides)).